The following is a 426-amino-acid chain: 3-phosphoshikimate 1-carboxyvinyltransferase (426 aa).

3-phosphoshikimate contacts are provided by Lys20, Ser21, and Arg25. Phosphoenolpyruvate is bound at residue Lys20. Positions 92 and 120 each coordinate phosphoenolpyruvate. 3-phosphoshikimate is bound by residues Ser165, Gln167, Asp313, and Lys340. Residue Gln167 participates in phosphoenolpyruvate binding. The active-site Proton acceptor is Asp313. The phosphoenolpyruvate site is built by Arg344 and Arg386.

The protein belongs to the EPSP synthase family. In terms of assembly, monomer.

Its subcellular location is the cytoplasm. The enzyme catalyses 3-phosphoshikimate + phosphoenolpyruvate = 5-O-(1-carboxyvinyl)-3-phosphoshikimate + phosphate. It participates in metabolic intermediate biosynthesis; chorismate biosynthesis; chorismate from D-erythrose 4-phosphate and phosphoenolpyruvate: step 6/7. In terms of biological role, catalyzes the transfer of the enolpyruvyl moiety of phosphoenolpyruvate (PEP) to the 5-hydroxyl of shikimate-3-phosphate (S3P) to produce enolpyruvyl shikimate-3-phosphate and inorganic phosphate. The chain is 3-phosphoshikimate 1-carboxyvinyltransferase from Brevibacillus brevis (strain 47 / JCM 6285 / NBRC 100599).